The chain runs to 118 residues: Large ribosomal subunit protein bL17 (118 aa).

The protein belongs to the bacterial ribosomal protein bL17 family. As to quaternary structure, part of the 50S ribosomal subunit. Contacts protein L32.

In Thermus thermophilus (strain ATCC BAA-163 / DSM 7039 / HB27), this protein is Large ribosomal subunit protein bL17.